The primary structure comprises 166 residues: Putative pre-16S rRNA nuclease (166 aa).

Residues 1–24 (MPDTAAPTPDRPGPDDPGRGRRLG) are disordered.

It belongs to the YqgF nuclease family.

The protein resides in the cytoplasm. Functionally, could be a nuclease involved in processing of the 5'-end of pre-16S rRNA. This chain is Putative pre-16S rRNA nuclease, found in Mycobacteroides abscessus (strain ATCC 19977 / DSM 44196 / CCUG 20993 / CIP 104536 / JCM 13569 / NCTC 13031 / TMC 1543 / L948) (Mycobacterium abscessus).